Consider the following 427-residue polypeptide: Delta(14)-sterol reductase (427 aa).

Over 1 to 25 (MSEQESRDNAAVDAVRQKYGFGFSW) the chain is Cytoplasmic. A helical membrane pass occupies residues 26–46 (LVLMIALPPLVYYLWICVTYY). Topologically, residues 47–70 (QGELVFTSDAAAWRRFWSHVAPPT) are periplasmic. The helical transmembrane segment at 71–91 (WHAAGLYAAWFLGQAALQVWA) threads the bilayer. Residues 92–110 (PGPTVQGMKLPDGSRLDYR) are Cytoplasmic-facing. Residues 111–131 (MNGIFSFLFTLAVVFGLVTMG) traverse the membrane as a helical segment. Topologically, residues 132-141 (WLDATVLYDQ) are periplasmic. Residues 142-162 (LGPLLTVVNIFTFVFAGFLYF) traverse the membrane as a helical segment. The Cytoplasmic portion of the chain corresponds to 163–197 (WGLNGKQWERPTGRPFYDYFMGTALNPRIGSLDLK). Residues 198-218 (LFCEARPGMIFWLLMNLSMAA) traverse the membrane as a helical segment. Over 219-226 (KQYELHGT) the chain is Periplasmic. A helical membrane pass occupies residues 227–247 (VTVPMLLVVGFQSFYLIDYFI). At 248-262 (HEEAVLTTWDIKHEK) the chain is on the cytoplasmic side. The helical transmembrane segment at 263–283 (FGWMLCWGDLVWLPFTYTLQA) threads the bilayer. Residues 284 to 291 (QYLVHHTH) lie on the Periplasmic side of the membrane. The helical transmembrane segment at 292–312 (DLPVWGIIAIVALNLAGYAIF) threads the bilayer. Topologically, residues 313-356 (RGANIQKHHFRRDPNRIVWGKPAKYIKTKQGSLLLTSGWWGIAR) are cytoplasmic. NADP(+) contacts are provided by residues lysine 319, arginine 323, leucine 347, tryptophan 352, and 359–360 (NY). The helical transmembrane segment at 357–377 (HMNYFGDLMIALSWCLPAAFG) threads the bilayer. Position 378 (serine 378) is a topological domain, periplasmic. Residues 379-399 (PIPYFHIVYFTILLLHREKRD) form a helical membrane-spanning segment. Residues aspartate 399, 403–407 (CLAKY), and tyrosine 414 contribute to the NADP(+) site. Topologically, residues 400–427 (DAMCLAKYGEDWLQYRKKVPWRIVPKIY) are cytoplasmic.

This sequence belongs to the ERG4/ERG24 family.

It is found in the cell inner membrane. It carries out the reaction 4,4-dimethyl-5alpha-cholesta-8,24-dien-3beta-ol + NADP(+) = 4,4-dimethyl-5alpha-cholesta-8,14,24-trien-3beta-ol + NADPH + H(+). It participates in steroid biosynthesis; zymosterol biosynthesis; zymosterol from lanosterol. Functionally, reduces the C14=C15 double bond of 4,4-dimethyl-cholesta-8,14,24-trienol to produce 4,4-dimethyl-cholesta-8,24-dienol. Complements the deletion of the Delta(14)-sterol reductase gene ERG24 in yeast. This chain is Delta(14)-sterol reductase, found in Methylotuvimicrobium alcaliphilum (strain DSM 19304 / NCIMB 14124 / VKM B-2133 / 20Z) (Methylomicrobium alcaliphilum).